The chain runs to 472 residues: MAGGEAGVTLGQPHLSRQDLATLDVTKLTPLSHEIISRQATINIGTIGHVAHGKSTVVKAISGVHTVRFKNELERNITIKLGYANAKIYKLDDSSCPRPECYRSCGSSTPDEFPSDIPGIKGNFRLVRHVSFVDCPGHDILMATMLNGAAVMDAALLLIAGNESCPQPQTSEHLAAIEIMKLKHILILQNKIDLVKESQAKEQYEQILAFVQGTVAEGAPIIPISAQLKYNIEVVCEYIVKKIPVPLRDFTSEPRLIVIRSFDVNKPGCEVDDLKGGVAGGSILKGVLKVGQEIEVRPGIVSKDSEGKLMCKPIFSKIVSLFAEHNDLQYAAPGGLIGVGTKIDPTLCRADRMVGQVLGAVGALPEIFTELEISYFLLRRLLGVRTEGDKKAAKVQKLSKNEVLMVNIGSLSTGGRVSAVKADLGKIVLTNPVCTEVGEKIALSRRVEKHWRLIGWGQIRRGVTIKPTIDDE.

N-acetylalanine is present on Ala-2. Ser-16 carries the post-translational modification Phosphoserine. The region spanning 39 to 247 (QATINIGTIG…YIVKKIPVPL (209 aa)) is the tr-type G domain. Residues 48-55 (GHVAHGKS) form a G1 region. 51–56 (AHGKST) is a GTP binding site. Residues 76 to 80 (NITIK) form a G2 region. The tract at residues 134 to 137 (DCPG) is G3. GTP contacts are provided by residues 190–193 (NKID) and 225–227 (SAQ). Residues 190 to 193 (NKID) form a G4 region. Residues 225–227 (SAQ) form a G5 region.

It belongs to the TRAFAC class translation factor GTPase superfamily. Classic translation factor GTPase family. EIF2G subfamily. EIF2 is a heterotrimer composed of an alpha (EIF2S1), a beta (EIF2S2) and a gamma (Eif2s3x and Eif2s3y) chain. eIF2 is member of the 43S pre-initiation complex (43S PIC). Widely expressed in males.

It catalyses the reaction GTP + H2O = GDP + phosphate + H(+). Its function is as follows. Member of the eIF2 complex that functions in the early steps of protein synthesis by forming a ternary complex with GTP and initiator tRNA. This complex binds to a 40S ribosomal subunit, followed by mRNA binding to form the 43S pre-initiation complex (43S PIC). Junction of the 60S ribosomal subunit to form the 80S initiation complex is preceded by hydrolysis of the GTP bound to eIF2 and release of an eIF2-GDP binary complex. In order for eIF2 to recycle and catalyze another round of initiation, the GDP bound to eIF2 must exchange with GTP by way of a reaction catalyzed by eIF-2B. Along with its paralog on chromosome X, may contribute to spermatogenesis up to the round spermatid stage. The chain is Eukaryotic translation initiation factor 2 subunit 3, Y-linked (Eif2s3y) from Rattus norvegicus (Rat).